A 277-amino-acid polypeptide reads, in one-letter code: Methylamine utilization protein MauF (277 aa).

7 helical membrane-spanning segments follow: residues 33–53, 59–79, 111–131, 132–152, 179–199, 205–225, and 257–277; these read IAVL…LASA, LWAV…WSPC, YGLG…IAGF, SGFG…YGAH, WVIG…YVQT, MTLA…VALF, and ALAD…LALI.

It localises to the cell membrane. It functions in the pathway one-carbon metabolism; methylamine degradation. The sequence is that of Methylamine utilization protein MauF (mauF) from Paracoccus denitrificans.